A 206-amino-acid chain; its full sequence is Large ribosomal subunit protein uL4 (206 aa).

Residues 43 to 52 (NKRQGTQSAK) are compositionally biased toward polar residues. The segment at 43–86 (NKRQGTQSAKTRAEVSGGGRKPWRQKGTGHARQGSTRSPQWKGG) is disordered.

Belongs to the universal ribosomal protein uL4 family. In terms of assembly, part of the 50S ribosomal subunit.

Its function is as follows. One of the primary rRNA binding proteins, this protein initially binds near the 5'-end of the 23S rRNA. It is important during the early stages of 50S assembly. It makes multiple contacts with different domains of the 23S rRNA in the assembled 50S subunit and ribosome. In terms of biological role, forms part of the polypeptide exit tunnel. The polypeptide is Large ribosomal subunit protein uL4 (Lachnoclostridium phytofermentans (strain ATCC 700394 / DSM 18823 / ISDg) (Clostridium phytofermentans)).